Reading from the N-terminus, the 39-residue chain is Photosystem II reaction center protein J (39 aa).

The helical transmembrane segment at 9–29 (LWLVGLVGGLAVITMLGLFIY) threads the bilayer.

The protein belongs to the PsbJ family. In terms of assembly, PSII is composed of 1 copy each of membrane proteins PsbA, PsbB, PsbC, PsbD, PsbE, PsbF, PsbH, PsbI, PsbJ, PsbK, PsbL, PsbM, PsbT, PsbX, PsbY, PsbZ, Psb30/Ycf12, at least 3 peripheral proteins of the oxygen-evolving complex and a large number of cofactors. It forms dimeric complexes.

The protein localises to the plastid. It is found in the chloroplast thylakoid membrane. Functionally, one of the components of the core complex of photosystem II (PSII). PSII is a light-driven water:plastoquinone oxidoreductase that uses light energy to abstract electrons from H(2)O, generating O(2) and a proton gradient subsequently used for ATP formation. It consists of a core antenna complex that captures photons, and an electron transfer chain that converts photonic excitation into a charge separation. In Phaeodactylum tricornutum (strain CCAP 1055/1), this protein is Photosystem II reaction center protein J.